Here is an 876-residue protein sequence, read N- to C-terminus: Valine--tRNA ligase (876 aa).

A 'HIGH' region motif is present at residues 44-54; it reads PNVTGKLHLGH. A 'KMSKS' region motif is present at residues 520 to 524; that stretch reads KMSKS. Residue Lys523 coordinates ATP. A coiled-coil region spans residues 805 to 876; the sequence is LEGLIDMDKE…VKARIEQLKA (72 aa).

Belongs to the class-I aminoacyl-tRNA synthetase family. ValS type 1 subfamily. In terms of assembly, monomer.

The protein localises to the cytoplasm. It catalyses the reaction tRNA(Val) + L-valine + ATP = L-valyl-tRNA(Val) + AMP + diphosphate. In terms of biological role, catalyzes the attachment of valine to tRNA(Val). As ValRS can inadvertently accommodate and process structurally similar amino acids such as threonine, to avoid such errors, it has a 'posttransfer' editing activity that hydrolyzes mischarged Thr-tRNA(Val) in a tRNA-dependent manner. In Staphylococcus aureus (strain MRSA252), this protein is Valine--tRNA ligase.